We begin with the raw amino-acid sequence, 237 residues long: Ribonuclease PH (237 aa).

Phosphate contacts are provided by residues R86 and 124-126 (GTR).

This sequence belongs to the RNase PH family. In terms of assembly, homohexameric ring arranged as a trimer of dimers.

It catalyses the reaction tRNA(n+1) + phosphate = tRNA(n) + a ribonucleoside 5'-diphosphate. Its function is as follows. Phosphorolytic 3'-5' exoribonuclease that plays an important role in tRNA 3'-end maturation. Removes nucleotide residues following the 3'-CCA terminus of tRNAs; can also add nucleotides to the ends of RNA molecules by using nucleoside diphosphates as substrates, but this may not be physiologically important. Probably plays a role in initiation of 16S rRNA degradation (leading to ribosome degradation) during starvation. This is Ribonuclease PH from Zymomonas mobilis subsp. mobilis (strain ATCC 31821 / ZM4 / CP4).